Reading from the N-terminus, the 82-residue chain is Putative membrane protein insertion efficiency factor (82 aa).

It belongs to the UPF0161 family.

The protein resides in the cell inner membrane. Could be involved in insertion of integral membrane proteins into the membrane. The chain is Putative membrane protein insertion efficiency factor from Rickettsia rickettsii (strain Iowa).